The primary structure comprises 133 residues: Serine/threonine-protein kinase RsbT (133 aa).

It carries out the reaction L-seryl-[protein] + ATP = O-phospho-L-seryl-[protein] + ADP + H(+). The enzyme catalyses L-threonyl-[protein] + ATP = O-phospho-L-threonyl-[protein] + ADP + H(+). In terms of biological role, provides the crucial link between the upstream module (communication of environmental stress) and the downstream module (integration of the environmental signals with signals of energy stress) that compose the signal transduction pathway controlling the sigma-B factor. Phosphorylates and inactivates its specific antagonist protein RsbS thanks to its serine kinase activity. Upon phosphorylation of RsbS, RsbT is released to stimulate RsbU, a PP2C phosphatase, thereby initiating the signaling cascade that ultimately activates sigma-B. The activity of the RsbU phosphatase may be stimulated by a long-lived interaction with RsbT and the serine kinase function of RsbT is not required to directly modify RsbU. Also phosphorylates RsbR thanks to its threonine kinase activity, preventing it to phosphorylate RsbT. The polypeptide is Serine/threonine-protein kinase RsbT (rsbT) (Bacillus subtilis (strain 168)).